The primary structure comprises 276 residues: uncharacterized protein (276 aa).

A signal peptide spans 1–29 (MKSHVRSFKTYIRDEIIKKGGWVNAHAHA).

It belongs to the metallo-dependent hydrolases superfamily.

This is an uncharacterized protein from Haemophilus influenzae (strain ATCC 51907 / DSM 11121 / KW20 / Rd).